Reading from the N-terminus, the 296-residue chain is Protoheme IX farnesyltransferase (296 aa).

Over 1-9 the chain is Cytoplasmic; that stretch reads MMFKQYLQV. A helical membrane pass occupies residues 10–28; sequence TKPGIIFGNLISVIGGFLL. The Periplasmic segment spans residues 29-37; sequence ASKGSIDYP. A helical membrane pass occupies residues 38–56; sequence LFIYTLVGVSLVVASGCVF. The Cytoplasmic portion of the chain corresponds to 57–78; sequence NNFIDRDIDRKMERTKNRVLVK. A helical membrane pass occupies residues 79–97; the sequence is GLISPGVSLVYATLLGIAG. At 98-107 the chain is on the periplasmic side; the sequence is FMLLWFGANP. Residues 108–126 form a helical membrane-spanning segment; sequence LACWLGVMGFVVYVGIYSL. The Cytoplasmic segment spans residues 127–197; it reads YMKRHSVYGT…YQAANIPVLP (71 aa). The chain crosses the membrane as a helical span at residues 198-216; it reads VVKGISVAKNHITLYIIAF. Topologically, residues 217-228 are periplasmic; the sequence is AVATLMLTLGGY. A helical membrane pass occupies residues 229-247; the sequence is AGYKYLVVAAAVSVWWLGM. Residues 248 to 268 are Cytoplasmic-facing; that stretch reads ALRGYKVEDDKVWARKLFGFS. The chain crosses the membrane as a helical span at residues 269–287; sequence IIAITALSIMMSVDFMVPN. Residues 288 to 296 are Periplasmic-facing; the sequence is SQSLLTYVW.

The protein belongs to the UbiA prenyltransferase family. Protoheme IX farnesyltransferase subfamily.

It localises to the cell inner membrane. It carries out the reaction heme b + (2E,6E)-farnesyl diphosphate + H2O = Fe(II)-heme o + diphosphate. The protein operates within porphyrin-containing compound metabolism; heme O biosynthesis; heme O from protoheme: step 1/1. Its function is as follows. Converts heme B (protoheme IX) to heme O by substitution of the vinyl group on carbon 2 of heme B porphyrin ring with a hydroxyethyl farnesyl side group. The polypeptide is Protoheme IX farnesyltransferase (Salmonella arizonae (strain ATCC BAA-731 / CDC346-86 / RSK2980)).